We begin with the raw amino-acid sequence, 334 residues long: L-lactate dehydrogenase C chain (334 aa).

NAD(+) contacts are provided by residues G30–K58 and R100. 3 residues coordinate substrate: R107, N139, and R170. N139 contributes to the NAD(+) binding site. The active-site Proton acceptor is the H194. Residue T249 participates in substrate binding.

Belongs to the LDH/MDH superfamily. LDH family. As to quaternary structure, homotetramer. Eye and liver.

It localises to the cytoplasm. It carries out the reaction (S)-lactate + NAD(+) = pyruvate + NADH + H(+). It participates in fermentation; pyruvate fermentation to lactate; (S)-lactate from pyruvate: step 1/1. The polypeptide is L-lactate dehydrogenase C chain (ldhc) (Fundulus heteroclitus (Killifish)).